Reading from the N-terminus, the 643-residue chain is Protein tramtrack, beta isoform (643 aa).

The BTB domain maps to 33 to 98 (TDVTLAVEGQ…MYRGEVSVDQ (66 aa)). Disordered stretches follow at residues 118 to 148 (EVND…PQLQ) and 171 to 300 (ANAG…GLDT). K123 is covalently cross-linked (Glycyl lysine isopeptide (Lys-Gly) (interchain with G-Cter in ubiquitin)). A compositionally biased stretch (low complexity) spans 125-145 (SPAAAAAGAGATGSESTATTP). Positions 176–187 (TPTLPVQPSLLS) are enriched in polar residues. The span at 192–201 (PKRKRGRPRK) shows a compositional bias: basic residues. Residue K201 forms a Glycyl lysine isopeptide (Lys-Gly) (interchain with G-Cter in ubiquitin) linkage. The segment covering 254 to 285 (HTDDLNESRDSLPSKRSKNSKDHRVVSHHEDN) has biased composition (basic and acidic residues). Glycyl lysine isopeptide (Lys-Gly) (interchain with G-Cter in ubiquitin) cross-links involve residues K355, K397, K418, K457, K478, and K480. 2 consecutive C2H2-type zinc fingers follow at residues 508–531 (YRCK…VTSH) and 538–561 (YPCP…KIIH). Residue K545 forms a Glycyl lysine isopeptide (Lys-Gly) (interchain with G-Cter in ubiquitin) linkage. The interval 584–643 (GVSGASTPPPPDLSGQNSNQSLPATSNALSTSSSSSTSSSSGSLGPLTTSAPPAPAAAAQ) is disordered. The segment covering 604–643 (SLPATSNALSTSSSSSTSSSSGSLGPLTTSAPPAPAAAAQ) has biased composition (low complexity).

Can form homodimers. Interacts with Trl in vivo via the BTB domain. Interacts with phyl. Interacts with Usp47. In terms of processing, polyubiquitinated by sina. Polyubiquitin linkage is mainly through 'Lys-48', but linkage through 'Lys-63' also occurs. Deubiquitination by Usp47 leads to its stabilization.

The protein resides in the nucleus. Its function is as follows. Binds to a number of sites in the transcriptional regulatory region of ftz. Isoform beta is required to repress inappropriate segmentation gene transcription and repress genes incompatible with development of photoreceptor cell fates. Probable repressor of the transcription of the segmentation genes ftz, eve, h, odd, run, and en. Inhibits Trl-dependent activation of eve. May bind to the region AGGGC/TGG. Degradation of ttk is directed by binding of sinah or sina, via the adapter molecule phyl which binds to the BTB domain of ttk. A second method of degradation exists that is phyl-independent, this is mediated by recognition of motifs in the C-terminus of ttk. The chain is Protein tramtrack, beta isoform (ttk) from Drosophila melanogaster (Fruit fly).